A 680-amino-acid chain; its full sequence is MERRVVKPPGQDMVVERLKSRYGLAGRCPVEENDMTGVWAALMNQQHELSDFDQTKYKRRIVTSPDGLDTYSSGDKVGSSPRYYSDGRNHPTPPFCSSFKHLNVNCLDDELDSFHDLKKWETEKELMEDDHRDGASKITKQSFKEMETDALMTSMASGLETECCSGSIDSPLKQAVYPRPKVSKKQGLLPHEINQIYDELYHIHMKLQYETTAQKKFAEELQKREQFLAEREQLLFSHETALSKIKGVKEEVLTRFQILKEQHGTEIEHLTEALKEKNKENKRMRSSFDTLRELNDNLRKQLNEVSEENKKMEIQAKRVQARLDNLQRKYEFMTVQRLKGDSHAAHEVKSSKQEKAPAPKPFKAALNGQVYELLTVFMDWISDCHLSKVEPEEPGVDGGKPPAKPSQRSDIQEKCVKLLPMMTEQLQWMPLVSAKLHEPFVRFIYWSLRQLDASARQSTMASTLRRLGEDVFKGVTMKGTQDNSLEHSVENKAKTAVFFKSSSLPLRFLSTLIVLRTVTQADYLAQAFDSLCLDLKTDEGKTLFLEYQAIPVILKHLRISSKGLLSNVIDSLLQMTVESKSLQPFLEACSNSLFFRTCSVLLRTPKLDLHILEKLSIILQKLSKIKSNKKLFEVFTIHLMLQEIQRTTHPEHAFLCINLNSTLFNLGLTKCNSLVTSTSH.

Threonine 63 bears the Phosphothreonine mark. The residue at position 64 (serine 64) is a Phosphoserine. Residues 260–339 (KEQHGTEIEH…YEFMTVQRLK (80 aa)) adopt a coiled-coil conformation. The segment at 390–410 (EPEEPGVDGGKPPAKPSQRSD) is disordered. Serine 484 is modified (phosphoserine).

The polypeptide is Coiled-coil domain-containing protein 138 (Ccdc138) (Mus musculus (Mouse)).